The sequence spans 222 residues: MATARTARSRRKVRKVRDKWKEKVWYEIYATPEFGGVFIGYTPANDPSLVLGRVAETSLRDLTGDPTKHMHRVYFKIFGVTGNKAIAQYYGHDTTREFMKSQIRRRRSRIDAILDVKTQDGHKIRTKAMVLTAYRANTKQKSDIRKKMEEIIKAMAKEKTFPQYVQAMLFGEMAEKIKNECKKIFPIKNVIIYKSEVLSLAKKEENEGFVKEAEEETAEAQE.

It belongs to the eukaryotic ribosomal protein eS1 family.

The polypeptide is Small ribosomal subunit protein eS1 (Methanocaldococcus jannaschii (strain ATCC 43067 / DSM 2661 / JAL-1 / JCM 10045 / NBRC 100440) (Methanococcus jannaschii)).